The primary structure comprises 91 residues: Acylphosphatase (91 aa).

Residues 3-90 enclose the Acylphosphatase-like domain; sequence RVSMIVSGQV…CGYSIFTIRR (88 aa). Catalysis depends on residues Arg-18 and Asn-36.

Belongs to the acylphosphatase family.

It carries out the reaction an acyl phosphate + H2O = a carboxylate + phosphate + H(+). This is Acylphosphatase (acyP) from Methanospirillum hungatei JF-1 (strain ATCC 27890 / DSM 864 / NBRC 100397 / JF-1).